The chain runs to 392 residues: Sex-determining region Y protein (392 aa).

The interval 4 to 81 (HVKRPMNAFM…YKYQPHRRAK (78 aa)) is sufficient for interaction with KPNB1. Positions 5-73 (VKRPMNAFMV…LHREKYPNYK (69 aa)) form a DNA-binding region, HMG box. Required for nuclear localization regions lie at residues 6–22 (KRPM…ERHK) and 75–81 (QPHRRAK). A sufficient for interaction with EP300 region spans residues 52-84 (RPFFQEAQRLKILHREKYPNYKYQPHRRAKVSQ). Lys81 bears the N6-acetyllysine mark. The interval 92–144 (AVASTKLYNLLQWDRNPHAITYRQDWSRAAHLYSKNQQSFYWQPVDIPTGHLQ) is necessary for interaction with ZNF208 isoform KRAB-O. The necessary for interaction with SLC9A3R2 and nuclear accumulation of SLC9A3R2 stretch occupies residues 94 to 138 (ASTKLYNLLQWDRNPHAITYRQDWSRAAHLYSKNQQSFYWQPVDI). The disordered stretch occupies residues 142–361 (HLQQQQQQQQ…QQQQQQQQQQ (220 aa)). Over residues 144–181 (QQQQQQQQQQQFHNHHQQQQQFYDHHQQQQQQQQQQQQ) the composition is skewed to low complexity. 2 stretches are compositionally biased toward basic and acidic residues: residues 182–197 (FHDH…DHHQ) and 210–228 (QEQQ…HDHQ). Low complexity predominate over residues 229–238 (QQQQQQQQQQ). 3 stretches are compositionally biased toward basic and acidic residues: residues 239-250 (FHDHHQQKQQFH), 261-295 (FHDH…HDHP), and 313-349 (QFHD…DHHQ). Residues 350 to 361 (QQQQQQQQQQQQ) are compositionally biased toward low complexity.

This sequence belongs to the SRY family. As to quaternary structure, interacts with KPNB1, ZNF208 isoform KRAB-O, PARP1 and SLC9A3R2. The interaction with KPNB1 is sensitive to dissociation by Ran in the GTP-bound form. Interaction with PARP1 impaired its DNA-binding activity. Interacts with CALM, EP300, HDAC3 and WT1. The interaction with EP300 modulates its DNA-binding activity. Post-translationally, degraded due to the presence of a degron at the C-terminus that promotes its degradation. In terms of processing, phosphorylated on serine residues by PKA. Phosphorylation by PKA enhances its DNA-binding activity and stimulates transcription repression. Acetylation of Lys-81 contributes to its nuclear localization and enhances its interaction with KPNB1. Post-translationally, poly-ADP-ribosylated by PARP1. ADP-ribosylation reduces its DNA-binding activity. Expressed in gonadal somatic pre-Sertoli cells. Expressed in the substantia nigra of the brain (at protein level). Expressed in diencephalon, cortex, the substantia nigra of the midbrain and the medial mammillary bodies of the hypothalamus of male, but not female. As to expression, expressed in gonadal somatic pre-Sertoli cells. While it is expressed at lower level compared to isoform Sry-S, this form is more stable and constitutes the predominant protein product of the Sry locus in XY gonads (at protein level).

It is found in the nucleus speckle. Its subcellular location is the cytoplasm. It localises to the nucleus. Functionally, transcriptional regulator that controls a genetic switch in male development. It is necessary and sufficient for initiating male sex determination by directing the development of supporting cell precursors (pre-Sertoli cells) as Sertoli rather than granulosa cells. Involved in different aspects of gene regulation including promoter activation or repression. Binds to the DNA consensus sequence 5'-[AT]AACAA[AT]-3'. SRY HMG box recognizes DNA by partial intercalation in the minor groove and promotes DNA bending. Also involved in pre-mRNA splicing. In male adult brain involved in the maintenance of motor functions of dopaminergic neurons. Its function is as follows. Constitutes the major isoform, which is necessary and sufficient for initiating male sex determination. Constitutes a minor isoform, which is unstable due to the presence of a degron at the C-terminus that promotes its degradation. Not necessary and sufficient for initiating male sex determination. The polypeptide is Sex-determining region Y protein (Mus musculus (Mouse)).